The sequence spans 26 residues: Citropin-2.1.3 (26 aa).

Expressed by the dorsal and submental skin glands.

It localises to the secreted. In Ranoidea citropa (Australian Blue Mountains tree frog), this protein is Citropin-2.1.3.